We begin with the raw amino-acid sequence, 84 residues long: Delta-thalatoxin-Hhe1a (84 aa).

An N-terminal signal peptide occupies residues 1–19 (MAYQKIVFVALMLVLAVSA). The propeptide occupies 20 to 33 (MRLPDQQDQDISVA). 3 disulfide bridges follow: Cys38-Cys78, Cys40-Cys68, and Cys61-Cys79.

This sequence belongs to the sea anemone sodium channel inhibitory toxin family. Type II subfamily.

Its subcellular location is the secreted. The protein localises to the nematocyst. Binds specifically to the voltage-gated sodium channel (Nav) and delays its inactivation. The protein is Delta-thalatoxin-Hhe1a of Heterodactyla hemprichii (Hemprich's sea anemone).